The sequence spans 555 residues: Hydroxylamine reductase (555 aa).

The [4Fe-4S] cluster site is built by Cys-5, Cys-8, Cys-17, and Cys-23. Hybrid [4Fe-2O-2S] cluster-binding residues include His-248, Glu-272, Cys-316, Cys-408, Cys-436, Cys-461, Glu-496, and Lys-498. Cysteine persulfide is present on Cys-408.

Belongs to the HCP family. The cofactor is [4Fe-4S] cluster. Hybrid [4Fe-2O-2S] cluster is required as a cofactor.

The protein resides in the cytoplasm. The enzyme catalyses A + NH4(+) + H2O = hydroxylamine + AH2 + H(+). Functionally, catalyzes the reduction of hydroxylamine to form NH(3) and H(2)O. The sequence is that of Hydroxylamine reductase from Halothermothrix orenii (strain H 168 / OCM 544 / DSM 9562).